The chain runs to 314 residues: 4-hydroxy-3-methylbut-2-enyl diphosphate reductase (314 aa).

Cysteine 12 lines the [4Fe-4S] cluster pocket. (2E)-4-hydroxy-3-methylbut-2-enyl diphosphate contacts are provided by histidine 41 and histidine 74. Dimethylallyl diphosphate is bound by residues histidine 41 and histidine 74. Isopentenyl diphosphate-binding residues include histidine 41 and histidine 74. Cysteine 96 is a [4Fe-4S] cluster binding site. Position 124 (histidine 124) interacts with (2E)-4-hydroxy-3-methylbut-2-enyl diphosphate. Residue histidine 124 participates in dimethylallyl diphosphate binding. Histidine 124 serves as a coordination point for isopentenyl diphosphate. Glutamate 126 serves as the catalytic Proton donor. Position 167 (threonine 167) interacts with (2E)-4-hydroxy-3-methylbut-2-enyl diphosphate. Cysteine 197 provides a ligand contact to [4Fe-4S] cluster. (2E)-4-hydroxy-3-methylbut-2-enyl diphosphate is bound by residues serine 225, serine 226, asparagine 227, and serine 269. Positions 225, 226, 227, and 269 each coordinate dimethylallyl diphosphate. The isopentenyl diphosphate site is built by serine 225, serine 226, asparagine 227, and serine 269.

Belongs to the IspH family. The cofactor is [4Fe-4S] cluster.

It catalyses the reaction isopentenyl diphosphate + 2 oxidized [2Fe-2S]-[ferredoxin] + H2O = (2E)-4-hydroxy-3-methylbut-2-enyl diphosphate + 2 reduced [2Fe-2S]-[ferredoxin] + 2 H(+). It carries out the reaction dimethylallyl diphosphate + 2 oxidized [2Fe-2S]-[ferredoxin] + H2O = (2E)-4-hydroxy-3-methylbut-2-enyl diphosphate + 2 reduced [2Fe-2S]-[ferredoxin] + 2 H(+). It participates in isoprenoid biosynthesis; dimethylallyl diphosphate biosynthesis; dimethylallyl diphosphate from (2E)-4-hydroxy-3-methylbutenyl diphosphate: step 1/1. Its pathway is isoprenoid biosynthesis; isopentenyl diphosphate biosynthesis via DXP pathway; isopentenyl diphosphate from 1-deoxy-D-xylulose 5-phosphate: step 6/6. Its function is as follows. Catalyzes the conversion of 1-hydroxy-2-methyl-2-(E)-butenyl 4-diphosphate (HMBPP) into a mixture of isopentenyl diphosphate (IPP) and dimethylallyl diphosphate (DMAPP). Acts in the terminal step of the DOXP/MEP pathway for isoprenoid precursor biosynthesis. The chain is 4-hydroxy-3-methylbut-2-enyl diphosphate reductase from Actinobacillus pleuropneumoniae serotype 7 (strain AP76).